A 44-amino-acid chain; its full sequence is MRDLKTYLSVAPVVSTLWFAALAGLLIEINRLFPDALIFPFFSF.

Residues 7–27 (YLSVAPVVSTLWFAALAGLLI) form a helical membrane-spanning segment.

Belongs to the PsaJ family.

The protein localises to the plastid. It localises to the chloroplast thylakoid membrane. Functionally, may help in the organization of the PsaE and PsaF subunits. The polypeptide is Photosystem I reaction center subunit IX (Lotus japonicus (Lotus corniculatus var. japonicus)).